Reading from the N-terminus, the 747-residue chain is Protein neuralized (747 aa).

The NHR 1 domain maps to 97-251 (PLQFHTVHGD…NCTGIEFLDA (155 aa)). Positions 280-292 (LPQQQQQLPQQQL) are enriched in low complexity. The interval 280-309 (LPQQQQQLPQQQLTAHHPLQQSRRSLPGGT) is disordered. Positions 359–514 (PVPFHITKGR…STQSLRMFRQ (156 aa)) constitute an NHR 2 domain. The segment at 694–735 (CTICYENPIDSVLYMCGHMCMCYDCAIEQWRGVGGGQCPLCR) adopts an RING-type zinc-finger fold.

The protein resides in the nucleus. Its function is as follows. Involved in neurogenesis. Interacts with other neurogenic proteins in the specification of the neuroblast versus epidermoblast cell fate. This Drosophila virilis (Fruit fly) protein is Protein neuralized (neur).